A 483-amino-acid chain; its full sequence is FAD-linked oxidoreductase pgmH (483 aa).

An FAD-binding PCMH-type domain is found at 54 to 215; it reads SIRLATLVVY…TEFKYRVHKQ (162 aa).

This sequence belongs to the oxygen-dependent FAD-linked oxidoreductase family. Requires FAD as cofactor.

It functions in the pathway pigment biosynthesis. It participates in secondary metabolite biosynthesis. In terms of biological role, FAD-linked oxidoreductase; part of the gene cluster that mediates the biosynthesis of pleosporalin A, ascomycone A, as well as a third cryptic naphthoquinone derived pigment, all responsible for the coloration of conidia. Essential for the production of pleosporalin A, but not the 2 other final products. The pathway begins with the biosynthesis of the cyclized heptaketide 3-acetonyl-1,6,8-trihydroxy-2-naphthaldehyde by the NR-PKS pgmA. The C-6 hydroxyl group is further methylated by the O-methyltransferase pgmB to yield fusarubinaldehyde which is in turn oxidized by the cytochrome P450 monooxygenase pgmC at C-9. The C-1 hydroxyl group is then methylated spontaneously. Although pgmE, pgmD and pgmH are essential for the production of pleosporalin A, it is not the case for the 2 other final products and it remains difficult to assign a specific function to each enzyme. PgmF and pgmG seem not to be involved in pigment biosynthesis although they were regulated by the cluster-specific transcription factor pgmR. In Aspergillus terreus (strain NIH 2624 / FGSC A1156), this protein is FAD-linked oxidoreductase pgmH.